The primary structure comprises 319 residues: Ester hydrolase C11orf54 homolog (319 aa).

Zn(2+) contacts are provided by His270, His272, and His282.

In terms of assembly, monomer. It depends on Zn(2+) as a cofactor.

Its subcellular location is the nucleus. It is found in the cytoplasm. Exhibits ester hydrolase activity on the substrate p-nitrophenyl acetate, in vitro. May regulate DNA damage and repair by regulating HIF1A degradation via chaperone-mediated autophagy (CMA). The polypeptide is Ester hydrolase C11orf54 homolog (Danio rerio (Zebrafish)).